Consider the following 78-residue polypeptide: Large ribosomal subunit protein bL28 (78 aa).

A disordered region spans residues 1–21 (MSRVCQVTGKSPITGNNVSHA). Polar residues predominate over residues 8–21 (TGKSPITGNNVSHA).

The protein belongs to the bacterial ribosomal protein bL28 family.

The polypeptide is Large ribosomal subunit protein bL28 (Hahella chejuensis (strain KCTC 2396)).